Reading from the N-terminus, the 296-residue chain is Ribosomal RNA small subunit methyltransferase A (296 aa).

S-adenosyl-L-methionine-binding residues include Asn40, Val42, Gly67, Glu88, Asp118, and Asn137.

It belongs to the class I-like SAM-binding methyltransferase superfamily. rRNA adenine N(6)-methyltransferase family. RsmA subfamily.

Its subcellular location is the cytoplasm. The catalysed reaction is adenosine(1518)/adenosine(1519) in 16S rRNA + 4 S-adenosyl-L-methionine = N(6)-dimethyladenosine(1518)/N(6)-dimethyladenosine(1519) in 16S rRNA + 4 S-adenosyl-L-homocysteine + 4 H(+). Specifically dimethylates two adjacent adenosines (A1518 and A1519) in the loop of a conserved hairpin near the 3'-end of 16S rRNA in the 30S particle. May play a critical role in biogenesis of 30S subunits. The chain is Ribosomal RNA small subunit methyltransferase A from Rhodococcus opacus (strain B4).